Here is a 123-residue protein sequence, read N- to C-terminus: UPF0102 protein APJL_1381 (123 aa).

The protein belongs to the UPF0102 family.

The chain is UPF0102 protein APJL_1381 from Actinobacillus pleuropneumoniae serotype 3 (strain JL03).